The chain runs to 344 residues: MNHAITMGIFWHLIGAASAACFYAPFKKVKHWSWETMWSVGGIVSWLILPWAISATLLPDFWAYYRSFSASTLLPVFLFGAMWGIGNINYGLTMRYLGMSMGIGIAIGITLIVGTLMTPIINGQFAVLMHTQGGQMTLLGVLVAVIGVGIVTRAGQLKERKMGIKAEEFNLKKGLLLAVMCGIFSAGMSFAMNAAKPMHDAAAALGVDPLYAALPSYVVIMGGGALVNLGFCFIRLAKVKNLSVKADFSLAKPLIISNLLLSALGGLMWYLQFFFYAWGHASIPAQYDYMSWMLHMSFYVLCGGVVGLVLKEWNNAGRRPVSVLSLGCVVIIIAANIVGLGMAS.

10 helical membrane-spanning segments follow: residues Ala4 to Ala24, Trp38 to Leu58, Phe68 to Ile88, Met101 to Ile121, Thr131 to Val151, Leu175 to Ala195, Leu214 to Ile234, Leu259 to Gly279, Met290 to Leu310, and Val323 to Ala343.

The protein belongs to the L-rhamnose transporter (TC 2.A.7.6) family.

It localises to the cell inner membrane. The enzyme catalyses L-rhamnopyranose(in) + H(+)(in) = L-rhamnopyranose(out) + H(+)(out). Its function is as follows. Uptake of L-rhamnose across the cytoplasmic membrane with the concomitant transport of protons into the cell (symport system). In Klebsiella pneumoniae subsp. pneumoniae (strain ATCC 700721 / MGH 78578), this protein is L-rhamnose-proton symporter.